Consider the following 272-residue polypeptide: Orotidine 5'-phosphate decarboxylase (272 aa).

Lysine 95 acts as the Proton donor in catalysis.

The protein belongs to the OMP decarboxylase family. Type 2 subfamily.

It catalyses the reaction orotidine 5'-phosphate + H(+) = UMP + CO2. Its pathway is pyrimidine metabolism; UMP biosynthesis via de novo pathway; UMP from orotate: step 2/2. The protein is Orotidine 5'-phosphate decarboxylase of Bordetella petrii (strain ATCC BAA-461 / DSM 12804 / CCUG 43448).